Consider the following 365-residue polypeptide: Glycerol dehydrogenase (365 aa).

Residues Asp-37, Gly-94, Lys-95, Thr-116, and Ser-119 each contribute to the NAD(+) site. Asp-121 provides a ligand contact to glycerol. Residues Ser-125, Leu-127, and Tyr-131 each coordinate NAD(+). Mn(2+) is bound by residues Asp-171, His-254, and His-271. Glycerol is bound at residue His-254.

It belongs to the iron-containing alcohol dehydrogenase family. In terms of assembly, homohexamer. It depends on Mn(2+) as a cofactor.

It catalyses the reaction glycerol + NAD(+) = dihydroxyacetone + NADH + H(+). The catalysed reaction is hydroxyacetone + NADH + H(+) = (S)-propane-1,2-diol + NAD(+). It participates in polyol metabolism; glycerol fermentation; glycerone phosphate from glycerol (oxidative route): step 1/2. Its activity is regulated as follows. Inhibited by zinc. Its function is as follows. Catalyzes the NAD-dependent oxidation of glycerol to dihydroxyacetone (glycerone). Allows microorganisms to utilize glycerol as a source of carbon under anaerobic conditions. Exhibits a rather broad substrate specificity since it can also oxidize 1,2-propanediol and 2,3-butanediol and reduce dihydroxyacetone. Cannot use NADP(+) as an electron acceptor for the oxidation of glycerol. In Citrobacter freundii, this protein is Glycerol dehydrogenase.